Reading from the N-terminus, the 298-residue chain is tRNA dimethylallyltransferase (298 aa).

Residue glycine 12 to threonine 19 coordinates ATP. Residue threonine 14–threonine 19 coordinates substrate. Residues aspartate 37–glutamine 40 are interaction with substrate tRNA.

It belongs to the IPP transferase family. Monomer. Mg(2+) is required as a cofactor.

It catalyses the reaction adenosine(37) in tRNA + dimethylallyl diphosphate = N(6)-dimethylallyladenosine(37) in tRNA + diphosphate. Catalyzes the transfer of a dimethylallyl group onto the adenine at position 37 in tRNAs that read codons beginning with uridine, leading to the formation of N6-(dimethylallyl)adenosine (i(6)A). The polypeptide is tRNA dimethylallyltransferase (Synechococcus sp. (strain CC9902)).